A 346-amino-acid polypeptide reads, in one-letter code: Holliday junction branch migration complex subunit RuvB (346 aa).

The large ATPase domain (RuvB-L) stretch occupies residues Met1–Tyr183. ATP contacts are provided by residues Ile22, Arg23, Gly64, Lys67, Thr68, Thr69, Glu130–Phe132, Arg173, Tyr183, and Arg220. Position 68 (Thr68) interacts with Mg(2+). The segment at Ser184–Lys254 is small ATPAse domain (RuvB-S). The interval Pro257–Phe346 is head domain (RuvB-H). DNA is bound by residues Arg293, Arg312, and Arg317.

It belongs to the RuvB family. As to quaternary structure, homohexamer. Forms an RuvA(8)-RuvB(12)-Holliday junction (HJ) complex. HJ DNA is sandwiched between 2 RuvA tetramers; dsDNA enters through RuvA and exits via RuvB. An RuvB hexamer assembles on each DNA strand where it exits the tetramer. Each RuvB hexamer is contacted by two RuvA subunits (via domain III) on 2 adjacent RuvB subunits; this complex drives branch migration. In the full resolvosome a probable DNA-RuvA(4)-RuvB(12)-RuvC(2) complex forms which resolves the HJ.

It is found in the cytoplasm. The enzyme catalyses ATP + H2O = ADP + phosphate + H(+). Its function is as follows. The RuvA-RuvB-RuvC complex processes Holliday junction (HJ) DNA during genetic recombination and DNA repair, while the RuvA-RuvB complex plays an important role in the rescue of blocked DNA replication forks via replication fork reversal (RFR). RuvA specifically binds to HJ cruciform DNA, conferring on it an open structure. The RuvB hexamer acts as an ATP-dependent pump, pulling dsDNA into and through the RuvAB complex. RuvB forms 2 homohexamers on either side of HJ DNA bound by 1 or 2 RuvA tetramers; 4 subunits per hexamer contact DNA at a time. Coordinated motions by a converter formed by DNA-disengaged RuvB subunits stimulates ATP hydrolysis and nucleotide exchange. Immobilization of the converter enables RuvB to convert the ATP-contained energy into a lever motion, pulling 2 nucleotides of DNA out of the RuvA tetramer per ATP hydrolyzed, thus driving DNA branch migration. The RuvB motors rotate together with the DNA substrate, which together with the progressing nucleotide cycle form the mechanistic basis for DNA recombination by continuous HJ branch migration. Branch migration allows RuvC to scan DNA until it finds its consensus sequence, where it cleaves and resolves cruciform DNA. This is Holliday junction branch migration complex subunit RuvB from Xanthomonas axonopodis pv. citri (strain 306).